The sequence spans 179 residues: Protein GrpE (179 aa).

The span at Met1 to Val14 shows a compositional bias: basic and acidic residues. The tract at residues Met1–Glu40 is disordered. Over residues Glu15 to Thr32 the composition is skewed to acidic residues.

Belongs to the GrpE family. As to quaternary structure, homodimer.

The protein resides in the cytoplasm. In terms of biological role, participates actively in the response to hyperosmotic and heat shock by preventing the aggregation of stress-denatured proteins, in association with DnaK and GrpE. It is the nucleotide exchange factor for DnaK and may function as a thermosensor. Unfolded proteins bind initially to DnaJ; upon interaction with the DnaJ-bound protein, DnaK hydrolyzes its bound ATP, resulting in the formation of a stable complex. GrpE releases ADP from DnaK; ATP binding to DnaK triggers the release of the substrate protein, thus completing the reaction cycle. Several rounds of ATP-dependent interactions between DnaJ, DnaK and GrpE are required for fully efficient folding. The protein is Protein GrpE of Streptococcus mutans serotype c (strain ATCC 700610 / UA159).